A 605-amino-acid chain; its full sequence is MAIKQLSETLINQIAAGEVIERPASAAKELIENALDAGATRIEIATAGGGKTLLRVTDNGIGMSPADLELAIRRHCTSKLNDSLADIRTLGFRGEALPSIGSVARLSITTRTAEAREGAAITVTGGRSEPARPSAAIVGTVVEVRDLFFATPARLKFMKSEKAEAAAISEVVRRMAIAFPRVRFVLSGSDRTTLEFPATGDDRLARMAQVLGRDFRDNAIEIDAEREGARLTGFAGVPTFNRGNSLQQYAFVNGRPVQDKLIMSALRAAYAETIPQGRYPIAVLSITLDPALVDVNVHPAKSDVRFRDPGLIRGLIIGAIREALTREGDRAATTGAHGLMRAFRPEFHRAGQQRPQEPWSAAASPHRPLRFEEAARGFAEAPQAAFSDFAQPSARSAAAAVEATRATDGQAASFPLGAARAQLHENYIVAQTDDGLVIVDQHAAHERLVFETMRTALHARPVPAQALLIPEIVGLPEDDCDRLMAHAEEFTRLGLAIERFGPAAVAVRETPAMLGEMDAAGLVRQLADELAEWDTASGLAGRLEYLAATMACHGSVRSGRRLRTEEMNALLRQMEATPGSGQCNHGRPTYIELKLADIERLFGRS.

Belongs to the DNA mismatch repair MutL/HexB family.

Its function is as follows. This protein is involved in the repair of mismatches in DNA. It is required for dam-dependent methyl-directed DNA mismatch repair. May act as a 'molecular matchmaker', a protein that promotes the formation of a stable complex between two or more DNA-binding proteins in an ATP-dependent manner without itself being part of a final effector complex. This is DNA mismatch repair protein MutL from Rhizobium meliloti (strain 1021) (Ensifer meliloti).